Here is a 436-residue protein sequence, read N- to C-terminus: Probable protein phosphatase 2C 15 (436 aa).

A PPM-type phosphatase domain is found at 30–302; the sequence is KAAKMEKPIV…DDTTCIVVDI (273 aa). Mn(2+) contacts are provided by D78, G79, D254, and D293.

The protein belongs to the PP2C family. Mg(2+) is required as a cofactor. The cofactor is Mn(2+).

It catalyses the reaction O-phospho-L-seryl-[protein] + H2O = L-seryl-[protein] + phosphate. The catalysed reaction is O-phospho-L-threonyl-[protein] + H2O = L-threonyl-[protein] + phosphate. In Arabidopsis thaliana (Mouse-ear cress), this protein is Probable protein phosphatase 2C 15.